We begin with the raw amino-acid sequence, 148 residues long: uncharacterized protein (148 aa).

Residues Leu3–Asp64 enclose the HTH asnC-type domain. The segment at residues Tyr22 to Lys41 is a DNA-binding region (H-T-H motif).

This is an uncharacterized protein from Pyrococcus horikoshii (strain ATCC 700860 / DSM 12428 / JCM 9974 / NBRC 100139 / OT-3).